A 262-amino-acid polypeptide reads, in one-letter code: Probable proteasome subunit beta type-7 (262 aa).

It belongs to the peptidase T1B family. The 26S proteasome consists of a 20S proteasome core and two 19S regulatory subunits. The 20S proteasome core is composed of 28 subunits that are arranged in four stacked rings, resulting in a barrel-shaped structure. The two end rings are each formed by seven alpha subunits, and the two central rings are each formed by seven beta subunits. The catalytic chamber with the active sites is on the inside of the barrel.

Its subcellular location is the cytoplasm. It is found in the nucleus. In terms of biological role, non-catalytic component of the proteasome, a multicatalytic proteinase complex which is characterized by its ability to cleave peptides with Arg, Phe, Tyr, Leu, and Glu adjacent to the leaving group at neutral or slightly basic pH. The proteasome has an ATP-dependent proteolytic activity. The protein is Probable proteasome subunit beta type-7 of Schizosaccharomyces pombe (strain 972 / ATCC 24843) (Fission yeast).